Reading from the N-terminus, the 257-residue chain is 5'-nucleotidase SurE (257 aa).

Residues Asp8, Asp9, Ser40, and Asn92 each coordinate a divalent metal cation.

It belongs to the SurE nucleotidase family. The cofactor is a divalent metal cation.

The protein localises to the cytoplasm. The catalysed reaction is a ribonucleoside 5'-phosphate + H2O = a ribonucleoside + phosphate. Its function is as follows. Nucleotidase that shows phosphatase activity on nucleoside 5'-monophosphates. This is 5'-nucleotidase SurE from Rhizobium rhizogenes (strain K84 / ATCC BAA-868) (Agrobacterium radiobacter).